A 349-amino-acid chain; its full sequence is Anthranilate phosphoribosyltransferase (349 aa).

Residues G82, 85 to 86 (GD), 92 to 95 (NVST), 110 to 118 (KHGNRGVSS), and S122 each bind 5-phospho-alpha-D-ribose 1-diphosphate. Residue G82 coordinates anthranilate. S94 contributes to the Mg(2+) binding site. N113 contributes to the anthranilate binding site. Anthranilate is bound at residue R168. Residues D227 and E228 each contribute to the Mg(2+) site.

The protein belongs to the anthranilate phosphoribosyltransferase family. Homodimer. Mg(2+) is required as a cofactor.

It carries out the reaction N-(5-phospho-beta-D-ribosyl)anthranilate + diphosphate = 5-phospho-alpha-D-ribose 1-diphosphate + anthranilate. Its pathway is amino-acid biosynthesis; L-tryptophan biosynthesis; L-tryptophan from chorismate: step 2/5. Catalyzes the transfer of the phosphoribosyl group of 5-phosphorylribose-1-pyrophosphate (PRPP) to anthranilate to yield N-(5'-phosphoribosyl)-anthranilate (PRA). The sequence is that of Anthranilate phosphoribosyltransferase from Acinetobacter baumannii (strain ATCC 17978 / DSM 105126 / CIP 53.77 / LMG 1025 / NCDC KC755 / 5377).